The chain runs to 496 residues: Probable CtpA-like serine protease (496 aa).

The span at 1–16 (MDDKQHTSSSDDERAE) shows a compositional bias: basic and acidic residues. Residues 1-27 (MDDKQHTSSSDDERAEIATSNQDQETN) are disordered. Positions 18–27 (ATSNQDQETN) are enriched in polar residues. Residues 39–59 (FISILIGTILITAVITVVAYI) form a helical membrane-spanning segment. The region spanning 124-206 (TKSFNEGVSG…TEVTLTVQRG (83 aa)) is the PDZ domain. Catalysis depends on charge relay system residues serine 329, aspartate 340, and lysine 354.

This sequence belongs to the peptidase S41A family.

It localises to the cell membrane. In Staphylococcus aureus (strain COL), this protein is Probable CtpA-like serine protease.